The sequence spans 507 residues: ATP synthase subunit alpha (507 aa).

Residue 170 to 177 coordinates ATP; that stretch reads GDRQTGKT.

The protein belongs to the ATPase alpha/beta chains family. As to quaternary structure, F-type ATPases have 2 components, CF(1) - the catalytic core - and CF(0) - the membrane proton channel. CF(1) has five subunits: alpha(3), beta(3), gamma(1), delta(1), epsilon(1). CF(0) has three main subunits: a(1), b(2) and c(9-12). The alpha and beta chains form an alternating ring which encloses part of the gamma chain. CF(1) is attached to CF(0) by a central stalk formed by the gamma and epsilon chains, while a peripheral stalk is formed by the delta and b chains.

The protein resides in the cell inner membrane. The enzyme catalyses ATP + H2O + 4 H(+)(in) = ADP + phosphate + 5 H(+)(out). Functionally, produces ATP from ADP in the presence of a proton gradient across the membrane. The alpha chain is a regulatory subunit. The protein is ATP synthase subunit alpha of Thermosipho melanesiensis (strain DSM 12029 / CIP 104789 / BI429).